We begin with the raw amino-acid sequence, 221 residues long: MHYRDQSLGELAITIPRATALFREFNLDFCCGGKQTLLRAATKRALDIDMLESRLADLSTQPSTEKDWQQASLGEMIVHIISRFHDRHRAQLPELIRMAEKVERVHHDKPGCPIGLTDQLTLIHDDLTQHMMKEERILFPMIQSGMGTQAGGPISVMEHEHDDAGQQLDVIKSLTNDVTPPDNACTTWRALYTGINEFIDDLMEHIHLENNQLFPRALRGE.

It belongs to the RIC family. YtfE subfamily. Homodimer.

Its subcellular location is the cytoplasm. In terms of biological role, di-iron-containing protein involved in the repair of iron-sulfur clusters damaged by oxidative and nitrosative stress conditions. This chain is Iron-sulfur cluster repair protein YtfE, found in Dickeya chrysanthemi (strain Ech1591) (Dickeya zeae (strain Ech1591)).